Here is a 256-residue protein sequence, read N- to C-terminus: Hydroxyethylthiazole kinase (256 aa).

M37 contributes to the substrate binding site. ATP contacts are provided by K113 and T159. G186 provides a ligand contact to substrate.

This sequence belongs to the Thz kinase family. It depends on Mg(2+) as a cofactor.

The enzyme catalyses 5-(2-hydroxyethyl)-4-methylthiazole + ATP = 4-methyl-5-(2-phosphooxyethyl)-thiazole + ADP + H(+). Its pathway is cofactor biosynthesis; thiamine diphosphate biosynthesis; 4-methyl-5-(2-phosphoethyl)-thiazole from 5-(2-hydroxyethyl)-4-methylthiazole: step 1/1. In terms of biological role, catalyzes the phosphorylation of the hydroxyl group of 4-methyl-5-beta-hydroxyethylthiazole (THZ). This is Hydroxyethylthiazole kinase from Exiguobacterium sibiricum (strain DSM 17290 / CCUG 55495 / CIP 109462 / JCM 13490 / 255-15).